A 734-amino-acid polypeptide reads, in one-letter code: Photosystem I P700 chlorophyll a apoprotein A2 (734 aa).

Transmembrane regions (helical) follow at residues 46–69, 135–158, 175–199, 273–291, 330–353, 369–395, 417–439, and 517–535; these read IFAS…FHVA, LYTG…LHLQ, LNHH…HVAI, IAHH…GHMY, IHFQ…QHMY, AALY…IFFI, AIIS…LYVH, and FLVH…LILV. The [4Fe-4S] cluster site is built by Cys559 and Cys568. Transmembrane regions (helical) follow at residues 575–596 and 643–665; these read AFYL…YWHW and LSVW…MFLI. His654, Met662, and Tyr670 together coordinate chlorophyll a. Phylloquinone is bound at residue Trp671. The chain crosses the membrane as a helical span at residues 707–727; the sequence is LVGLAHFSVGYIFTYAAFLIA.

This sequence belongs to the PsaA/PsaB family. In terms of assembly, the PsaA/B heterodimer binds the P700 chlorophyll special pair and subsequent electron acceptors. PSI consists of a core antenna complex that captures photons, and an electron transfer chain that converts photonic excitation into a charge separation. The eukaryotic PSI reaction center is composed of at least 11 subunits. Requires P700 is a chlorophyll a/chlorophyll a' dimer, A0 is one or more chlorophyll a, A1 is one or both phylloquinones and FX is a shared 4Fe-4S iron-sulfur center. as cofactor.

The protein localises to the plastid. It is found in the chloroplast thylakoid membrane. The catalysed reaction is reduced [plastocyanin] + hnu + oxidized [2Fe-2S]-[ferredoxin] = oxidized [plastocyanin] + reduced [2Fe-2S]-[ferredoxin]. Functionally, psaA and PsaB bind P700, the primary electron donor of photosystem I (PSI), as well as the electron acceptors A0, A1 and FX. PSI is a plastocyanin-ferredoxin oxidoreductase, converting photonic excitation into a charge separation, which transfers an electron from the donor P700 chlorophyll pair to the spectroscopically characterized acceptors A0, A1, FX, FA and FB in turn. Oxidized P700 is reduced on the lumenal side of the thylakoid membrane by plastocyanin. The protein is Photosystem I P700 chlorophyll a apoprotein A2 of Pelargonium hortorum (Common geranium).